The sequence spans 185 residues: Elongation factor P (185 aa).

Belongs to the elongation factor P family.

It localises to the cytoplasm. The protein operates within protein biosynthesis; polypeptide chain elongation. In terms of biological role, involved in peptide bond synthesis. Stimulates efficient translation and peptide-bond synthesis on native or reconstituted 70S ribosomes in vitro. Probably functions indirectly by altering the affinity of the ribosome for aminoacyl-tRNA, thus increasing their reactivity as acceptors for peptidyl transferase. In Petrotoga mobilis (strain DSM 10674 / SJ95), this protein is Elongation factor P.